The following is a 487-amino-acid chain: Bifunctional protein GlmU (487 aa).

A pyrophosphorylase region spans residues 1 to 235 (MSHSPTPLAA…PEEASGVNDR (235 aa)). UDP-N-acetyl-alpha-D-glucosamine is bound by residues 13-16 (LAAG), Lys-27, Gln-82, 87-88 (GT), 110-112 (SGD), Gly-147, Glu-162, Asn-177, and Asn-233. Position 112 (Asp-112) interacts with Mg(2+). Position 233 (Asn-233) interacts with Mg(2+). A linker region spans residues 236 to 256 (EELARAGRVLLRRRASELMRS). Positions 257-487 (GVTIEDPERF…ADSPRGGRAS (231 aa)) are N-acetyltransferase. Arg-339 and Lys-357 together coordinate UDP-N-acetyl-alpha-D-glucosamine. Catalysis depends on His-369, which acts as the Proton acceptor. Residues Tyr-372 and Asn-383 each contribute to the UDP-N-acetyl-alpha-D-glucosamine site. Acetyl-CoA-binding positions include Ala-386, 392-393 (NY), Ser-411, Ala-429, and Arg-446. The segment at 453 to 487 (EGWVARRKAEAQNKGAAEAAPAPSPADSPRGGRAS) is disordered. The span at 468-481 (AAEAAPAPSPADSP) shows a compositional bias: low complexity.

The protein in the N-terminal section; belongs to the N-acetylglucosamine-1-phosphate uridyltransferase family. It in the C-terminal section; belongs to the transferase hexapeptide repeat family. Homotrimer. The cofactor is Mg(2+).

Its subcellular location is the cytoplasm. The enzyme catalyses alpha-D-glucosamine 1-phosphate + acetyl-CoA = N-acetyl-alpha-D-glucosamine 1-phosphate + CoA + H(+). It catalyses the reaction N-acetyl-alpha-D-glucosamine 1-phosphate + UTP + H(+) = UDP-N-acetyl-alpha-D-glucosamine + diphosphate. It participates in nucleotide-sugar biosynthesis; UDP-N-acetyl-alpha-D-glucosamine biosynthesis; N-acetyl-alpha-D-glucosamine 1-phosphate from alpha-D-glucosamine 6-phosphate (route II): step 2/2. The protein operates within nucleotide-sugar biosynthesis; UDP-N-acetyl-alpha-D-glucosamine biosynthesis; UDP-N-acetyl-alpha-D-glucosamine from N-acetyl-alpha-D-glucosamine 1-phosphate: step 1/1. Its pathway is bacterial outer membrane biogenesis; LPS lipid A biosynthesis. Its function is as follows. Catalyzes the last two sequential reactions in the de novo biosynthetic pathway for UDP-N-acetylglucosamine (UDP-GlcNAc). The C-terminal domain catalyzes the transfer of acetyl group from acetyl coenzyme A to glucosamine-1-phosphate (GlcN-1-P) to produce N-acetylglucosamine-1-phosphate (GlcNAc-1-P), which is converted into UDP-GlcNAc by the transfer of uridine 5-monophosphate (from uridine 5-triphosphate), a reaction catalyzed by the N-terminal domain. This is Bifunctional protein GlmU from Anaeromyxobacter sp. (strain Fw109-5).